We begin with the raw amino-acid sequence, 24 residues long: RuBisCO large subunit-binding protein subunit beta, chloroplastic (24 aa).

The protein belongs to the chaperonin (HSP60) family. As to quaternary structure, oligomer of probably six alpha and six beta subunits.

It is found in the plastid. The protein resides in the chloroplast. Functionally, this protein binds RuBisCO small and large subunits and is implicated in the assembly of the enzyme oligomer. This is RuBisCO large subunit-binding protein subunit beta, chloroplastic from Populus euphratica (Euphrates poplar).